A 1327-amino-acid chain; its full sequence is MPTIFQTPTPNIDITLNNSTQFYYSTPQQTSPLQKQQQQQQQQQQQQQQQQQQQTSPIQQQISQQQQISPLQQLLQKQQQQQQSPVHQIHQQLIQQIIPPKQQEKQQEKIQDELKIQSTTPVINNNINNINNNINTTNNNNKTNERQNNEESNQISTITTTGTTTGTTATIISPNKLDIEQFVKGNEKVSRRTRAHVSLQNLDFEELDAYFDTHVSTIPLEEATSLSQSNHFGFLDTNIYNDEYKQFITNLKSGGFGDINIFEEEDDEDYIPPEEEEDDDEDNINVYNDKNIDYSTNITSKNNSNEDYNSNEDHNSNDENDYNNTANNINNNNIGDESDNNNNNNNNINNNSNKGDDDDDDDDDNNDDDDDDNDISYVDLNNDGENDESSNEMAALVNDYLENEAKEINGQNGFFKLLDLNLGEQFKQVIAPLPLNQITSTIQQQQQNDFILPIENFIGISNSVLVSPIPDFDPNFKPDSKIEKKLSSITLNGTQLNNLYITTPPQQQQQSSSSINSSNTMSSSSSSSSLSKNKLKKKKKEEKRKEEKRKEEKRKEKKRKKRQSITISKFKKNKKKTNGGFSSDSESDSSSDDSDDSDFYYSDIEEGGGGNGNGSGSGVGVVDSDNEEGDSSSDDFSKKKKRKLYHTNNSNNSIENNNNNNNNNNHESTSNSIFTLTLEQIQEVKLQIAQHYQLLIQVYLLMRIQTNPENFNLNLKKKKKIQSSSSSSSSTIKEIDSAEDDEDNYNNNNNNINNDDEDDNNNNNEDDNDDIEKYYSTYRNIVNRKPPTDMVQHNGMIDSVKRMLDQLFNYHQKHVENQIYSKIIFQQMESPSKVFTRSVKKALVPHVTSQLFDSEAIKLYPYLNELIVEDPIPSFKTMEIILSIFKDHFSESYNYRNVKLNQLKFTGGEDLLLLMGVKRFGTFNWRIIQKRYFPNKTDDQLFHRYKNLLSHSSANNQLKQYLNGAKFTKEEEEKLDGAIKIHGLKWDIISRDYLHWKEPAMLKKFYEKREKQVEKKNLFERRQLKKEKRNLERQRKQEQQRLLELEMEQDEIERQKQLEFNSTNNNNNNNNNNNNNNNNNNNNNNNNNNNNNNNNNNNNNNNENSSTNSNNDSGNENNYEFGDNETEILNDNIEISTTIDINNPIIENNSSTSTTRETSPVQMNPCPISSLSITNQQFQLQQDQYQLQQYQFYQQQQQYNQQQYEQQQQQQQQQQQQQQQQQQQQQQQQQQQQQHEQQQNEQQRTNNLSTETIIKSDNLNIVDGILIKWTREEDRIILITVKEKGTVDNEIWKSLSDTKIQDKTPDQIMYRYLQLLELIKRSQFAKQ.

A compositionally biased stretch (low complexity) spans 131 to 142 (NNNINTTNNNNK). 4 disordered regions span residues 131–153 (NNNINTTNNNNKTNERQNNEESN), 263–390 (EEED…DESS), 504–668 (PPQQ…NHES), and 717–770 (KKKK…DNDD). The span at 263–283 (EEEDDEDYIPPEEEEDDDEDN) shows a compositional bias: acidic residues. Over residues 322-353 (YNNTANNINNNNIGDESDNNNNNNNNINNNSN) the composition is skewed to low complexity. Residues 356–374 (DDDDDDDDDNNDDDDDDND) show a composition bias toward acidic residues. A compositionally biased stretch (low complexity) spans 511-532 (SSSSINSSNTMSSSSSSSSLSK). The segment covering 533-542 (NKLKKKKKEE) has biased composition (basic residues). A compositionally biased stretch (basic and acidic residues) spans 543 to 554 (KRKEEKRKEEKR). The segment covering 555–577 (KEKKRKKRQSITISKFKKNKKKT) has biased composition (basic residues). The span at 585–606 (SESDSSSDDSDDSDFYYSDIEE) shows a compositional bias: acidic residues. Residues 607–619 (GGGGNGNGSGSGV) are compositionally biased toward gly residues. Acidic residues predominate over residues 624 to 633 (SDNEEGDSSS). Composition is skewed to low complexity over residues 646-668 (HTNNSNNSIENNNNNNNNNNHES) and 722-732 (QSSSSSSSSTI). Positions 754 to 770 (NDDEDDNNNNNEDDNDD) are enriched in acidic residues. Positions 897–953 (NVKLNQLKFTGGEDLLLLMGVKRFGTFNWRIIQKRYFPNKTDDQLFHRYKNLLSHSS) constitute an HTH myb-type domain. The segment at residues 925–949 (WRIIQKRYFPNKTDDQLFHRYKNLL) is a DNA-binding region (H-T-H motif). The 52-residue stretch at 959 to 1010 (KQYLNGAKFTKEEEEKLDGAIKIHGLKWDIISRDYLHWKEPAMLKKFYEKRE) folds into the Myb-like 1 domain. Composition is skewed to low complexity over residues 1061-1118 (NSTN…NENN) and 1144-1160 (PIIENNSSTSTTRETSP). Disordered regions lie at residues 1061–1122 (NSTN…YEFG) and 1144–1168 (PIIENNSSTSTTRETSPVQMNPCPI). The 49-residue stretch at 1268–1316 (KWTREEDRIILITVKEKGTVDNEIWKSLSDTKIQDKTPDQIMYRYLQLL) folds into the Myb-like 2 domain.

It localises to the nucleus. In Dictyostelium discoideum (Social amoeba), this protein is Myb-like protein O (mybO).